The following is a 353-amino-acid chain: JmjC domain-containing protein E (353 aa).

Positions 138–348 constitute a JmjC domain; sequence YYIQYQNNSL…ETTKYQKQIK (211 aa).

In Dictyostelium discoideum (Social amoeba), this protein is JmjC domain-containing protein E (jcdE).